We begin with the raw amino-acid sequence, 77 residues long: SS18-like protein 2 (77 aa).

An SH2-binding motif is present at residues 50-53 (YQHV).

It belongs to the SS18 family.

The polypeptide is SS18-like protein 2 (SS18L2) (Homo sapiens (Human)).